The following is a 67-amino-acid chain: SPbeta prophage-derived uncharacterized protein YoqK (67 aa).

The sequence is that of SPbeta prophage-derived uncharacterized protein YoqK (yoqK) from Bacillus subtilis (strain 168).